The sequence spans 263 residues: Sepiapterin reductase (263 aa).

NADP(+) contacts are provided by residues 18–24 (GASRGFG), 46–47 (RT), and 73–74 (DL). Substrate-binding positions include 160-161 (SL) and Tyr173. Lys177 is a binding site for NADP(+). Gly202 is a substrate binding site. NADP(+) is bound at residue 204–209 (LDTDMH). Asp260 contributes to the substrate binding site.

It belongs to the sepiapterin reductase family. In terms of assembly, homodimer.

The protein localises to the cytoplasm. It catalyses the reaction L-erythro-7,8-dihydrobiopterin + NADP(+) = L-sepiapterin + NADPH + H(+). It carries out the reaction (6R)-L-erythro-5,6,7,8-tetrahydrobiopterin + 2 NADP(+) = 6-pyruvoyl-5,6,7,8-tetrahydropterin + 2 NADPH + 2 H(+). Catalyzes the final one or two reductions in tetra-hydrobiopterin biosynthesis to form 5,6,7,8-tetrahydrobiopterin. The sequence is that of Sepiapterin reductase (spr) from Xenopus laevis (African clawed frog).